The following is a 465-amino-acid chain: Cruciferin CRU4 (465 aa).

The first 22 residues, 1 to 22 (MGPTSLLSFFFTFLTLFHGFTA), serve as a signal peptide directing secretion. 2 disulfides stabilise this stretch: Cys-29–Cys-62 and Cys-105–Cys-283. 2 consecutive Cupin type-1 domains span residues 34–236 (LNAL…ETAQ) and 289–438 (ENLD…QEAR). Thr-108 bears the Phosphothreonine mark. Positions 112-135 (SPVFGQGQGQEQGQGQGQGQGQGF) are disordered. Positions 117–133 (QGQGQEQGQGQGQGQGQ) are enriched in gly residues. At Tyr-306 the chain carries Phosphotyrosine. Residues Ser-308 and Ser-443 each carry the phosphoserine modification.

This sequence belongs to the 11S seed storage protein (globulins) family. Heterohexamer; each subunit is composed of an acidic and a basic chain derived from a single precursor and linked by a disulfide bond.

The protein resides in the rough endoplasmic reticulum. In terms of biological role, this is a seed storage protein. The polypeptide is Cruciferin CRU4 (CRU4) (Brassica napus (Rape)).